The primary structure comprises 393 residues: MEFDEIKDALNALKRGESIIVVDDEDRENEGDLVAITQWMNDNTINFMAKEGRGLICAPISKDLALKFNLMPMVEHNTDGFGTNFTVSIDHATTSTGISAFDRMATARALINPESTPEDFHKPGHLFPLIAKENGVLERTGHTEAAVDLAKLTKAAPAGVICEIMNEDGTMAKGEQLEAFKHQHGLKMITIESLVNYQKDKDTSVELKAKVNMPTDHGAFEMYGFESSLTKEEIVVLAKGEPRVTENVRIHSACLTGDIFHSQRCDCGAQLESAMKYINEHGGMIIYLPQEGRGIGLINKLRAYELIEQGHDTVTANLALGFDEDLRDYHIAAQILNYFNVQQVNLLSNNPKKFEGLSEYGIKVADRTPIIVAENEHNHDYMNTKKIKMGHLI.

The interval 1-200 (MEFDEIKDAL…IESLVNYQKD (200 aa)) is DHBP synthase. D-ribulose 5-phosphate contacts are provided by residues 27–28 (RE), Asp-32, 139–143 (RTGHT), and Glu-163. Glu-28 is a binding site for Mg(2+). His-142 is a binding site for Mg(2+). The segment at 201-393 (KDTSVELKAK…TKKIKMGHLI (193 aa)) is GTP cyclohydrolase II. A GTP-binding site is contributed by 249–253 (RIHSA). Residues Cys-254, Cys-265, and Cys-267 each contribute to the Zn(2+) site. Residues Gln-270, 291–293 (EGR), and Thr-313 each bind GTP. The active-site Proton acceptor; for GTP cyclohydrolase activity is the Asp-325. Residue Arg-327 is the Nucleophile; for GTP cyclohydrolase activity of the active site. Positions 348 and 353 each coordinate GTP.

In the N-terminal section; belongs to the DHBP synthase family. It in the C-terminal section; belongs to the GTP cyclohydrolase II family. Requires Mg(2+) as cofactor. It depends on Mn(2+) as a cofactor. Zn(2+) serves as cofactor.

It catalyses the reaction D-ribulose 5-phosphate = (2S)-2-hydroxy-3-oxobutyl phosphate + formate + H(+). The enzyme catalyses GTP + 4 H2O = 2,5-diamino-6-hydroxy-4-(5-phosphoribosylamino)-pyrimidine + formate + 2 phosphate + 3 H(+). Its pathway is cofactor biosynthesis; riboflavin biosynthesis; 2-hydroxy-3-oxobutyl phosphate from D-ribulose 5-phosphate: step 1/1. The protein operates within cofactor biosynthesis; riboflavin biosynthesis; 5-amino-6-(D-ribitylamino)uracil from GTP: step 1/4. Functionally, catalyzes the conversion of D-ribulose 5-phosphate to formate and 3,4-dihydroxy-2-butanone 4-phosphate. Its function is as follows. Catalyzes the conversion of GTP to 2,5-diamino-6-ribosylamino-4(3H)-pyrimidinone 5'-phosphate (DARP), formate and pyrophosphate. The polypeptide is Riboflavin biosynthesis protein RibBA (Staphylococcus haemolyticus (strain JCSC1435)).